A 220-amino-acid chain; its full sequence is Protein-methionine-sulfoxide reductase heme-binding subunit MsrQ (220 aa).

Helical transmembrane passes span 20–40 (IWLL…LGAS), 52–72 (EHTL…VTPI), 86–106 (ALGL…MVLD), 122–142 (PFIT…LTSN), and 159–179 (LVYV…KSWP).

It belongs to the MsrQ family. Heterodimer of a catalytic subunit (MsrP) and a heme-binding subunit (MsrQ). Requires FMN as cofactor. It depends on heme b as a cofactor.

The protein resides in the cell inner membrane. Its function is as follows. Part of the MsrPQ system that repairs oxidized periplasmic proteins containing methionine sulfoxide residues (Met-O), using respiratory chain electrons. Thus protects these proteins from oxidative-stress damage caused by reactive species of oxygen and chlorine generated by the host defense mechanisms. MsrPQ is essential for the maintenance of envelope integrity under bleach stress, rescuing a wide series of structurally unrelated periplasmic proteins from methionine oxidation. MsrQ provides electrons for reduction to the reductase catalytic subunit MsrP, using the quinone pool of the respiratory chain. The polypeptide is Protein-methionine-sulfoxide reductase heme-binding subunit MsrQ (Brucella anthropi (strain ATCC 49188 / DSM 6882 / CCUG 24695 / JCM 21032 / LMG 3331 / NBRC 15819 / NCTC 12168 / Alc 37) (Ochrobactrum anthropi)).